We begin with the raw amino-acid sequence, 79 residues long: Translational regulator CsrA (79 aa).

Belongs to the CsrA/RsmA family. Homodimer; the beta-strands of each monomer intercalate to form a hydrophobic core, while the alpha-helices form wings that extend away from the core.

It localises to the cytoplasm. In terms of biological role, a translational regulator that binds mRNA to regulate translation initiation and/or mRNA stability. Usually binds in the 5'-UTR at or near the Shine-Dalgarno sequence preventing ribosome-binding, thus repressing translation. Its main target seems to be the major flagellin gene, while its function is anatagonized by FliW. This chain is Translational regulator CsrA, found in Geotalea uraniireducens (strain Rf4) (Geobacter uraniireducens).